A 485-amino-acid chain; its full sequence is Glutamyl-tRNA(Gln) amidotransferase subunit A (485 aa).

Active-site charge relay system residues include K79 and S154. S178 serves as the catalytic Acyl-ester intermediate.

This sequence belongs to the amidase family. GatA subfamily. Heterotrimer of A, B and C subunits.

It carries out the reaction L-glutamyl-tRNA(Gln) + L-glutamine + ATP + H2O = L-glutaminyl-tRNA(Gln) + L-glutamate + ADP + phosphate + H(+). In terms of biological role, allows the formation of correctly charged Gln-tRNA(Gln) through the transamidation of misacylated Glu-tRNA(Gln) in organisms which lack glutaminyl-tRNA synthetase. The reaction takes place in the presence of glutamine and ATP through an activated gamma-phospho-Glu-tRNA(Gln). This Clostridium botulinum (strain Alaska E43 / Type E3) protein is Glutamyl-tRNA(Gln) amidotransferase subunit A.